A 416-amino-acid chain; its full sequence is MTYIDTLGQQAKVASRQIAKLSTAAKNDLLNQVAKALVAESDYIITENAKDMANASENGISKIMQDRLLLTEDRIAGIAEGVRQVADLQDPIGQVVRGYTNLDGLKIVQKRVPMGVIAMIFESRPNVSIDAFSLAFKTNNAIILRGGRDAINSNKALVTVARKALKNAGITADAVQFVEDTSHEVAEELMVATKYVDLLIPRGGARLIQTVKEKAKVPVIETGVGNCHIYVDKYANLDMATQIVINAKTQRPSVCNAAESLVVHADIVEEFLPNLEKAILKIQSVEFRADERALKLMEKAVPASPEDFATEFLDYIMSVKVVDSLDEAINWINTYTTSHSEAIVTQDISRAEQFQDDVDAAAVYVNASTRFTDGFVFGLGAEIGISTQKMHARGPMGLEALTSTKFYINGQGQIRE.

Belongs to the gamma-glutamyl phosphate reductase family.

The protein resides in the cytoplasm. It catalyses the reaction L-glutamate 5-semialdehyde + phosphate + NADP(+) = L-glutamyl 5-phosphate + NADPH + H(+). The protein operates within amino-acid biosynthesis; L-proline biosynthesis; L-glutamate 5-semialdehyde from L-glutamate: step 2/2. Catalyzes the NADPH-dependent reduction of L-glutamate 5-phosphate into L-glutamate 5-semialdehyde and phosphate. The product spontaneously undergoes cyclization to form 1-pyrroline-5-carboxylate. The polypeptide is Gamma-glutamyl phosphate reductase (Streptococcus thermophilus (strain CNRZ 1066)).